The sequence spans 243 residues: UPF0246 protein Sez_1855 (243 aa).

The protein belongs to the UPF0246 family.

The polypeptide is UPF0246 protein Sez_1855 (Streptococcus equi subsp. zooepidemicus (strain MGCS10565)).